The primary structure comprises 148 residues: CDC25-like phosphatase YCH1 (148 aa).

M1 carries the post-translational modification N-acetylmethionine. Residues 29–137 (LREPFQVVDV…WQSVYGDDES (109 aa)) form the Rhodanese domain.

Belongs to the MPI phosphatase family.

It localises to the cytoplasm. Its subcellular location is the nucleus. In terms of biological role, protein phosphatase. This chain is CDC25-like phosphatase YCH1 (YCH1), found in Saccharomyces cerevisiae (strain ATCC 204508 / S288c) (Baker's yeast).